The sequence spans 475 residues: Putative amidase AmiD (475 aa).

Active-site charge relay system residues include lysine 93 and serine 166. The active-site Acyl-ester intermediate is serine 190.

This sequence belongs to the amidase family.

The catalysed reaction is a monocarboxylic acid amide + H2O = a monocarboxylate + NH4(+). The protein is Putative amidase AmiD (amiD) of Mycobacterium bovis (strain ATCC BAA-935 / AF2122/97).